The primary structure comprises 98 residues: NADH-ubiquinone oxidoreductase chain 4L (98 aa).

The next 3 helical transmembrane spans lie at 1–21 (MTPT…GLAF), 26–46 (LLSA…ALSL), and 59–79 (APML…ALLV).

This sequence belongs to the complex I subunit 4L family.

It localises to the mitochondrion membrane. The catalysed reaction is a ubiquinone + NADH + 5 H(+)(in) = a ubiquinol + NAD(+) + 4 H(+)(out). Functionally, core subunit of the mitochondrial membrane respiratory chain NADH dehydrogenase (Complex I) which catalyzes electron transfer from NADH through the respiratory chain, using ubiquinone as an electron acceptor. Part of the enzyme membrane arm which is embedded in the lipid bilayer and involved in proton translocation. The sequence is that of NADH-ubiquinone oxidoreductase chain 4L (MT-ND4L) from Gadus morhua (Atlantic cod).